Consider the following 316-residue polypeptide: Phospholipase A1 2 (316 aa).

A signal peptide spans 1–4 (ADDL). A propeptide spanning residues 5–14 (TTLRNGTLDR) is cleaved from the precursor. A disulfide bridge connects residues Cys20 and Cys103. Ser153 serves as the catalytic Nucleophile. The Charge relay system role is filled by Asp181. Disulfide bonds link Cys192-Cys197 and Cys235-Cys240. Catalysis depends on His242, which acts as the Charge relay system. 3 disulfides stabilise this stretch: Cys257–Cys284, Cys258–Cys309, and Cys277–Cys282.

It belongs to the AB hydrolase superfamily. Lipase family. Expressed by the venom gland.

It is found in the secreted. The enzyme catalyses a 1,2-diacyl-sn-glycero-3-phosphocholine + H2O = a 2-acyl-sn-glycero-3-phosphocholine + a fatty acid + H(+). Catalyzes the hydrolysis of phosphatidylcholine with phospholipase A1 activity. May act as an allergen and induce hemolytic activity. The chain is Phospholipase A1 2 from Polistes dominula (European paper wasp).